The following is a 502-amino-acid chain: Type-2 serine--tRNA ligase (502 aa).

Alanine 304 contributes to the L-serine binding site. Residue cysteine 306 coordinates Zn(2+). Arginine 336 contacts L-serine. ATP-binding positions include 336–338 (RYE) and 347–348 (RV). L-serine contacts are provided by residues 353 to 355 (RVE) and glutamine 400. Glutamate 355 is a binding site for Zn(2+). Glutamate 432 serves as a coordination point for ATP. Residue asparagine 435 coordinates L-serine. Cysteine 461 contacts Zn(2+). Residue arginine 468 coordinates ATP.

This sequence belongs to the class-II aminoacyl-tRNA synthetase family. Type-2 seryl-tRNA synthetase subfamily. Homodimer. Zn(2+) is required as a cofactor.

It is found in the cytoplasm. It catalyses the reaction tRNA(Ser) + L-serine + ATP = L-seryl-tRNA(Ser) + AMP + diphosphate + H(+). The enzyme catalyses tRNA(Sec) + L-serine + ATP = L-seryl-tRNA(Sec) + AMP + diphosphate + H(+). Its pathway is aminoacyl-tRNA biosynthesis; selenocysteinyl-tRNA(Sec) biosynthesis; L-seryl-tRNA(Sec) from L-serine and tRNA(Sec): step 1/1. Its function is as follows. Catalyzes the attachment of serine to tRNA(Ser). Is also able to aminoacylate tRNA(Sec) with serine, to form the misacylated tRNA L-seryl-tRNA(Sec), which will be further converted into selenocysteinyl-tRNA(Sec). In Methanococcoides burtonii (strain DSM 6242 / NBRC 107633 / OCM 468 / ACE-M), this protein is Type-2 serine--tRNA ligase.